A 495-amino-acid chain; its full sequence is WD repeat-containing protein 37 (495 aa).

The segment at 1–34 (MPTESGSWAAARQTKQKRKSHSLSIKRTNSSEQD) is disordered. A compositionally biased stretch (polar residues) spans 22 to 31 (SLSIKRTNSS). WD repeat units lie at residues 154–194 (GHRD…CLIK) and 197–236 (GHAGSVNSIKFHPTEQIALTASGDQTAHIWRYMVQLPTPQ). The interval 237 to 268 (PMADTSQISGEEEVDFSDKDENDGDGDASSDC) is disordered. The segment covering 246 to 264 (GEEEVDFSDKDENDGDGDA) has biased composition (acidic residues). 5 WD repeats span residues 280 to 319 (SHQGVVIAADWLVGGKQAVTASWDRTANLYDVETSELVHS), 322 to 361 (GHDQELTHCCTHPTQRLVVTSSRDTTFRLWDFRDPSIHSV), 366 to 404 (GHTDTVTSAVFTVGDNVVSGSDDRTVKVWDLKNMRSPIA), 407 to 446 (RTDSAVNRISVSVGQRIIALPHDNRQVRLFDISGVRLARL), and 453 to 494 (GHRR…LLQE).

It is found in the cytoplasm. It localises to the nucleus. The sequence is that of WD repeat-containing protein 37 (wdr37) from Xenopus laevis (African clawed frog).